The chain runs to 563 residues: Serine palmitoyltransferase 3 (563 aa).

Residues 1 to 29 show a composition bias toward polar residues; it reads MANLNDSAVTNGTLHNPKTQQGKRQSTGC. The tract at residues 1–32 is disordered; the sequence is MANLNDSAVTNGTLHNPKTQQGKRQSTGCVKN. Residues 59–79 form a helical membrane-spanning segment; sequence PLYVYVLTYMGYGIGILFGYL. N6-(pyridoxal phosphate)lysine is present on K371.

This sequence belongs to the class-II pyridoxal-phosphate-dependent aminotransferase family. In terms of assembly, component of the serine palmitoyltransferase (SPT) complex, which is composed of SPTLC1, SPTLC2 or SPTLC3 and SPTSSA or SPTSSB. The heterodimer consisting of SPTLC1 and SPTLC2/SPTLC3 forms the catalytic core of the enzyme, while SPTSSA or SPTSSB subunits determine substrate specificity. SPT also interacts with ORMDL proteins, especially ORMDL3, which negatively regulate SPT activity in the presence of ceramides. The cofactor is pyridoxal 5'-phosphate. As to expression, expressed in white and brown adipose tissues.

The protein localises to the endoplasmic reticulum membrane. The enzyme catalyses L-serine + hexadecanoyl-CoA + H(+) = 3-oxosphinganine + CO2 + CoA. The catalysed reaction is dodecanoyl-CoA + L-serine + H(+) = 3-oxotetradecasphinganine + CO2 + CoA. It catalyses the reaction tetradecanoyl-CoA + L-serine + H(+) = 3-oxohexadecasphinganine + CO2 + CoA. It carries out the reaction octadecanoyl-CoA + L-serine + H(+) = 3-oxoeicosasphinganine + CO2 + CoA. Its pathway is lipid metabolism; sphingolipid metabolism. SPT complex catalytic activity is negatively regulated by ORMDL proteins, including ORMDL3, in the presence of ceramides. This mechanism allows to maintain ceramide levels at sufficient concentrations for the production of complex sphingolipids, but which prevents the accumulation of ceramides to levels that trigger apoptosis. Component of the serine palmitoyltransferase multisubunit enzyme (SPT) that catalyzes the initial and rate-limiting step in sphingolipid biosynthesis by condensing L-serine and activated acyl-CoA (most commonly palmitoyl-CoA) to form long-chain bases. The SPT complex is composed of SPTLC1, SPTLC2 or SPTLC3 and SPTSSA or SPTSSB. Within this complex, the heterodimer consisting of SPTLC1 and SPTLC2/SPTLC3 forms the catalytic core. The composition of the serine palmitoyltransferase (SPT) complex determines the substrate preference. The SPTLC1-SPTLC2-SPTSSA complex shows a strong preference for C16-CoA substrate, while the SPTLC1-SPTLC3-SPTSSA isozyme uses both C14-CoA and C16-CoA as substrates, with a slight preference for C14-CoA. The SPTLC1-SPTLC2-SPTSSB complex shows a strong preference for C18-CoA substrate, while the SPTLC1-SPTLC3-SPTSSB isozyme displays an ability to use a broader range of acyl-CoAs, without apparent preference. This chain is Serine palmitoyltransferase 3, found in Mus musculus (Mouse).